The chain runs to 54 residues: uncharacterized protein (54 aa).

Composition is skewed to basic and acidic residues over residues 1 to 19 (MTEKKQQNKPNENPEHNDL) and 26 to 54 (EELKENMNDEKHKRQQRDNSQSERDYDTK). Residues 1–54 (MTEKKQQNKPNENPEHNDLTDPIPNEELKENMNDEKHKRQQRDNSQSERDYDTK) are disordered.

This is an uncharacterized protein from Bacillus subtilis (strain 168).